The chain runs to 214 residues: Cytochrome c biogenesis ATP-binding export protein CcmA (214 aa).

The ABC transporter domain maps to 12–214; it reads LAAHALAFSR…TRMLTLEAAA (203 aa). 44 to 51 is a binding site for ATP; it reads GDNGAGKT.

It belongs to the ABC transporter superfamily. CcmA exporter (TC 3.A.1.107) family. In terms of assembly, the complex is composed of two ATP-binding proteins (CcmA) and two transmembrane proteins (CcmB).

It localises to the cell inner membrane. The catalysed reaction is heme b(in) + ATP + H2O = heme b(out) + ADP + phosphate + H(+). In terms of biological role, part of the ABC transporter complex CcmAB involved in the biogenesis of c-type cytochromes; once thought to export heme, this seems not to be the case, but its exact role is uncertain. Responsible for energy coupling to the transport system. The polypeptide is Cytochrome c biogenesis ATP-binding export protein CcmA (Xanthomonas oryzae pv. oryzae (strain MAFF 311018)).